The chain runs to 318 residues: Olfactory receptor-like protein COR3 (318 aa).

Residues 1–26 lie on the Extracellular side of the membrane; it reads MASGNCTTPTTFILSGLTDNPGLQMP. N5 is a glycosylation site (N-linked (GlcNAc...) asparagine). The chain crosses the membrane as a helical span at residues 27 to 49; sequence LFMVFLAIYTITLLTNLGLIRLI. The Cytoplasmic portion of the chain corresponds to 50 to 57; the sequence is SVDLHLQT. A helical membrane pass occupies residues 58-79; the sequence is PMYIFLQNLSFTDAAYSTVITP. Topologically, residues 80–100 are extracellular; the sequence is KMLATFLEERKTISYVGCILQ. The cysteines at positions 97 and 179 are disulfide-linked. A helical membrane pass occupies residues 101 to 120; it reads YFSFVLLTTSECLLLAVMAY. The Cytoplasmic portion of the chain corresponds to 121-139; it reads DRYVAICKPLLYPAIMTKA. Residues 140 to 164 form a helical membrane-spanning segment; it reads VCWRLVESLYFLAFLNSLVHTCGLL. The Extracellular portion of the chain corresponds to 165 to 205; it reads KLSFCYSNVVNHFFCDISPLFQISSSSIAISELLVIISGSL. Residues 206–226 traverse the membrane as a helical segment; it reads FVMSSIIIILISYVFIILTVV. Topologically, residues 227-239 are cytoplasmic; the sequence is MIRSKDGKYKAFS. A helical membrane pass occupies residues 240–260; the sequence is TCTSHLMAVSLFHGTVIFMYL. Residues 261–271 lie on the Extracellular side of the membrane; the sequence is RPVKLFSLDTD. Residues 272–292 traverse the membrane as a helical segment; the sequence is KIASLFYTVVIPMLNPLIYSW. The Cytoplasmic segment spans residues 293–318; the sequence is RNKEVKDALRRLTATTFGFIDSKAVQ.

Belongs to the G-protein coupled receptor 1 family.

The protein resides in the cell membrane. Functionally, odorant receptor. This is Olfactory receptor-like protein COR3 (COR3) from Gallus gallus (Chicken).